The following is a 130-amino-acid chain: Large ribosomal subunit protein bL21 (130 aa).

It belongs to the bacterial ribosomal protein bL21 family. As to quaternary structure, part of the 50S ribosomal subunit. Contacts protein L20.

Functionally, this protein binds to 23S rRNA in the presence of protein L20. This Trichormus variabilis (strain ATCC 29413 / PCC 7937) (Anabaena variabilis) protein is Large ribosomal subunit protein bL21.